Reading from the N-terminus, the 1749-residue chain is Kinesin-like protein KIF13A (1749 aa).

The 348-residue stretch at 5–352 (KVKVAVRVRP…LRYADRAKRI (348 aa)) folds into the Kinesin motor domain. 102 to 109 (GQTGSGKS) lines the ATP pocket. Residues 359–431 (NEDPNAKVIR…QERQRQLESM (73 aa)) adopt a coiled-coil conformation. The 51-residue stretch at 469 to 519 (HTRVGADTSQDIQLFGIGIQPEHCEIDIAADGDITLTPKENARSCVNGTLV) folds into the FHA domain. The stretch at 552 to 775 (LKDFERETSS…VPEAKRLYGK (224 aa)) forms a coiled coil. Disordered regions lie at residues 633-652 (QQLS…LAYS) and 834-853 (IPER…SGSL). At Ser636 the chain carries Phosphoserine. A coiled-coil region spans residues 1086 to 1126 (SDALIKRREYLDEQIKKVSNKKEKTEDDMEREARLVEQWVG). Ser1274 carries the phosphoserine modification. The segment covering 1370 to 1383 (LSTPNVHNVSSSRP) has biased composition (polar residues). Disordered stretches follow at residues 1370 to 1402 (LSTP…QLDV) and 1417 to 1436 (TLPR…ENPH). Positions 1421–1430 (DSPRRSKEGC) are enriched in basic and acidic residues. Phosphoserine is present on residues Ser1441, Ser1477, Ser1481, Ser1524, Ser1600, and Ser1650. Residues 1475–1499 (LLSQEDSEEEENELEALSRKLMLTQ) adopt a coiled-coil conformation. Disordered stretches follow at residues 1584-1665 (CAEP…GHQA) and 1698-1749 (DFDG…TATR). Residues 1719 to 1741 (ETDHKGIPERPPDADRLHPKIEN) are compositionally biased toward basic and acidic residues.

The protein belongs to the TRAFAC class myosin-kinesin ATPase superfamily. Kinesin family. In terms of assembly, interacts with AP1G1 and AP1G2. Interacts with ZFYVE26. Interacts with AP2B1.

It is found in the golgi apparatus membrane. The protein resides in the cytoplasm. Its subcellular location is the cytoskeleton. It localises to the microtubule organizing center. The protein localises to the centrosome. It is found in the midbody. The protein resides in the endosome membrane. Plus end-directed microtubule-dependent motor protein involved in intracellular transport and regulating various processes such as mannose-6-phosphate receptor (M6PR) transport to the plasma membrane, endosomal sorting during melanosome biogenesis and cytokinesis. During melanosome maturation, required for delivering melanogenic enzymes from recycling endosomes to nascent melanosomes by creating peripheral recycling endosomal subdomains in melanocytes. Also required for the abscission step in cytokinesis: mediates translocation of ZFYVE26, and possibly TTC19, to the midbody during cytokinesis. Mediates the transport of M6PR-containing vesicles from trans-Golgi network to the plasma membrane via direct interaction with the AP-1 complex. In Mus musculus (Mouse), this protein is Kinesin-like protein KIF13A (Kif13a).